Reading from the N-terminus, the 129-residue chain is MLHLHILSWVLAIILFIATYLNISKNQGRSPFFKPLHMILRLFMLLTLISGFWILIQSFMNGGANHMLLTLKMLCGVAVVGLMEVSIAKRKRHEQSHTMFWITIALIIITMVLGVILPLGPISKLFGIG.

The next 4 helical transmembrane spans lie at 1–21 (MLHLHILSWVLAIILFIATYL), 36–56 (LHMILRLFMLLTLISGFWILI), 67–87 (MLLTLKMLCGVAVVGLMEVSI), and 99–119 (MFWITIALIIITMVLGVILPL).

The protein belongs to the UPF0344 family.

It is found in the cell membrane. The chain is UPF0344 protein USA300HOU_0928 from Staphylococcus aureus (strain USA300 / TCH1516).